Here is a 495-residue protein sequence, read N- to C-terminus: Probable cytosol aminopeptidase (495 aa).

Lysine 261 and aspartate 266 together coordinate Mn(2+). Lysine 273 is an active-site residue. Positions 284, 343, and 345 each coordinate Mn(2+). Arginine 347 is a catalytic residue.

It belongs to the peptidase M17 family. Requires Mn(2+) as cofactor.

It is found in the cytoplasm. It catalyses the reaction Release of an N-terminal amino acid, Xaa-|-Yaa-, in which Xaa is preferably Leu, but may be other amino acids including Pro although not Arg or Lys, and Yaa may be Pro. Amino acid amides and methyl esters are also readily hydrolyzed, but rates on arylamides are exceedingly low.. The catalysed reaction is Release of an N-terminal amino acid, preferentially leucine, but not glutamic or aspartic acids.. Functionally, presumably involved in the processing and regular turnover of intracellular proteins. Catalyzes the removal of unsubstituted N-terminal amino acids from various peptides. In Chelativorans sp. (strain BNC1), this protein is Probable cytosol aminopeptidase.